The chain runs to 421 residues: 3-phosphoshikimate 1-carboxyvinyltransferase (421 aa).

Positions 20, 21, and 25 each coordinate 3-phosphoshikimate. Lys20 provides a ligand contact to phosphoenolpyruvate. Phosphoenolpyruvate-binding residues include Gly90 and Arg117. Ser162, Ser163, Gln164, Ser190, Asp304, and Lys331 together coordinate 3-phosphoshikimate. Phosphoenolpyruvate is bound at residue Gln164. Asp304 acts as the Proton acceptor in catalysis. Phosphoenolpyruvate-binding residues include Arg335 and Arg376.

This sequence belongs to the EPSP synthase family. Monomer.

It localises to the cytoplasm. The catalysed reaction is 3-phosphoshikimate + phosphoenolpyruvate = 5-O-(1-carboxyvinyl)-3-phosphoshikimate + phosphate. The protein operates within metabolic intermediate biosynthesis; chorismate biosynthesis. Catalyzes the transfer of the enolpyruvyl moiety of phosphoenolpyruvate (PEP) to the 5-hydroxyl of shikimate-3-phosphate (S3P) to produce enolpyruvyl shikimate-3-phosphate and inorganic phosphate. The chain is 3-phosphoshikimate 1-carboxyvinyltransferase from Methanothrix thermoacetophila (strain DSM 6194 / JCM 14653 / NBRC 101360 / PT) (Methanosaeta thermophila).